Consider the following 873-residue polypeptide: Protein translocase subunit SecA (873 aa).

ATP is bound by residues glutamine 85, 103–107, and aspartate 492; that span reads GEGKT. Over residues 835-856 the composition is skewed to basic and acidic residues; the sequence is RYAEEEGKQPIRKENQIGRNDD. The segment at 835-873 is disordered; the sequence is RYAEEEGKQPIRKENQIGRNDDCPCGSGKKYKKCCGKNA. Residues cysteine 857, cysteine 859, cysteine 868, and cysteine 869 each coordinate Zn(2+). Residues 863–873 show a composition bias toward basic residues; that stretch reads KKYKKCCGKNA.

The protein belongs to the SecA family. In terms of assembly, monomer and homodimer. Part of the essential Sec protein translocation apparatus which comprises SecA, SecYEG and auxiliary proteins SecDF. Other proteins may also be involved. Zn(2+) serves as cofactor.

The protein resides in the cell membrane. It is found in the cytoplasm. The catalysed reaction is ATP + H2O + cellular proteinSide 1 = ADP + phosphate + cellular proteinSide 2.. Functionally, part of the Sec protein translocase complex. Interacts with the SecYEG preprotein conducting channel. Has a central role in coupling the hydrolysis of ATP to the transfer of proteins into and across the cell membrane, serving as an ATP-driven molecular motor driving the stepwise translocation of polypeptide chains across the membrane. This chain is Protein translocase subunit SecA, found in Desulforamulus reducens (strain ATCC BAA-1160 / DSM 100696 / MI-1) (Desulfotomaculum reducens).